We begin with the raw amino-acid sequence, 463 residues long: Phosphomannomutase/phosphoglucomutase (463 aa).

The active-site Phosphoserine intermediate is the serine 108. Positions 108, 242, 244, and 246 each coordinate Mg(2+). The substrate site is built by glutamate 325, serine 327, and histidine 329.

It belongs to the phosphohexose mutase family. In terms of assembly, monomer. Requires Mg(2+) as cofactor.

It catalyses the reaction alpha-D-mannose 1-phosphate = D-mannose 6-phosphate. The catalysed reaction is alpha-D-glucose 1-phosphate = alpha-D-glucose 6-phosphate. The protein operates within nucleotide-sugar biosynthesis; GDP-alpha-D-mannose biosynthesis; alpha-D-mannose 1-phosphate from D-fructose 6-phosphate: step 2/2. It participates in bacterial outer membrane biogenesis; lipopolysaccharide biosynthesis. Functionally, the phosphomannomutase activity produces a precursor for alginate polymerization. The alginate layer causes a mucoid phenotype and provides a protective barrier against host immune defenses and antibiotics. Also involved in core-LPS biosynthesis due to its phosphoglucomutase activity. Essential for biofilm production. This chain is Phosphomannomutase/phosphoglucomutase (algC), found in Pseudomonas putida (strain ATCC 47054 / DSM 6125 / CFBP 8728 / NCIMB 11950 / KT2440).